The primary structure comprises 436 residues: Trigger factor (436 aa).

Positions 161-246 constitute a PPIase FKBP-type domain; that stretch reads GMRVTMDFIG…LIKVEEQILP (86 aa).

It belongs to the FKBP-type PPIase family. Tig subfamily.

The protein resides in the cytoplasm. The catalysed reaction is [protein]-peptidylproline (omega=180) = [protein]-peptidylproline (omega=0). Its function is as follows. Involved in protein export. Acts as a chaperone by maintaining the newly synthesized protein in an open conformation. Functions as a peptidyl-prolyl cis-trans isomerase. The sequence is that of Trigger factor from Aeromonas salmonicida (strain A449).